The following is a 479-amino-acid chain: MSPQTETKASVGFKAGVKEYKLTYYTPEYETKDTDILAAFRVTPQPGVPPEEAGAAVAAESSTGTWTTVWTDGLTSLDRYKGRCYHIEPVPGEETQFIAYVAYPLDLFEEGSVTNMFTSIVGNVFGFKALAALRLEDLRIPPAYTKTFQGPPHGIQVERDKLNKYGRPLLGCTIKPKLGLSAKNYGRAVYECLRGGLDFTKDDENVNSQPFMRWRDRFLFCAEAIYKSQAETGEIKGHYLNATAGTCEEMIKRAVFARELGVPIVMHDYLTGGFTANTSLAHYCRDNGLLLHIHRAMHAVIDRQKNHGMHFRVLAKALRLSGGDHVHAGTVVGKLEGDRESTLGFVDLLRDDYVEKDRSRGIFFTQDWVSLPGVLPVASGGIHVWHMPALTEIFGDDSVLQFGGGTLGHPWGNAPGAVANRVALEACVQARNEGRDLAVEGNEIIREACKWSPELAAACEVWKEIRFNFPTVDKLDGQE.

A propeptide spanning residues methionine 1–serine 2 is cleaved from the precursor. Residues asparagine 123 and threonine 173 each coordinate substrate. The Proton acceptor role is filled by lysine 175. Lysine 177 contacts substrate. 3 residues coordinate Mg(2+): lysine 201, aspartate 203, and glutamate 204. Lysine 201 is modified (N6-carboxylysine). Serine 208 is subject to Phosphoserine. Histidine 294 functions as the Proton acceptor in the catalytic mechanism. Substrate-binding residues include arginine 295 and histidine 327. Threonine 330 carries the phosphothreonine modification. Serine 379 lines the substrate pocket.

Belongs to the RuBisCO large chain family. Type I subfamily. Heterohexadecamer of 8 large chains and 8 small chains; disulfide-linked. The disulfide link is formed within the large subunit homodimers. Requires Mg(2+) as cofactor. The disulfide bond which can form in the large chain dimeric partners within the hexadecamer appears to be associated with oxidative stress and protein turnover.

Its subcellular location is the plastid. It is found in the chloroplast. The enzyme catalyses 2 (2R)-3-phosphoglycerate + 2 H(+) = D-ribulose 1,5-bisphosphate + CO2 + H2O. It carries out the reaction D-ribulose 1,5-bisphosphate + O2 = 2-phosphoglycolate + (2R)-3-phosphoglycerate + 2 H(+). RuBisCO catalyzes two reactions: the carboxylation of D-ribulose 1,5-bisphosphate, the primary event in carbon dioxide fixation, as well as the oxidative fragmentation of the pentose substrate in the photorespiration process. Both reactions occur simultaneously and in competition at the same active site. This Arabis hirsuta (Hairy rock-cress) protein is Ribulose bisphosphate carboxylase large chain.